The primary structure comprises 396 residues: Elongation factor Tu (396 aa).

Residues lysine 11 to glutamate 205 form the tr-type G domain. Residues glycine 20 to threonine 27 are G1. Glycine 20–threonine 27 serves as a coordination point for GTP. Mg(2+) is bound at residue threonine 27. The segment at glycine 61–asparagine 65 is G2. Residues aspartate 82 to glycine 85 are G3. GTP contacts are provided by residues aspartate 82–histidine 86 and asparagine 137–aspartate 140. The segment at asparagine 137 to aspartate 140 is G4. Positions serine 175–leucine 177 are G5.

It belongs to the TRAFAC class translation factor GTPase superfamily. Classic translation factor GTPase family. EF-Tu/EF-1A subfamily. In terms of assembly, monomer.

The protein resides in the cytoplasm. It catalyses the reaction GTP + H2O = GDP + phosphate + H(+). Its function is as follows. GTP hydrolase that promotes the GTP-dependent binding of aminoacyl-tRNA to the A-site of ribosomes during protein biosynthesis. The chain is Elongation factor Tu from Lactobacillus gasseri (strain ATCC 33323 / DSM 20243 / BCRC 14619 / CIP 102991 / JCM 1131 / KCTC 3163 / NCIMB 11718 / NCTC 13722 / AM63).